The primary structure comprises 861 residues: Probable beta-glucosidase A (861 aa).

An N-terminal signal peptide occupies residues 1–19 (MKLGWIEVAALAAASVVSA). Asn62, Asn212, and Asn253 each carry an N-linked (GlcNAc...) asparagine glycan. Asp281 is an active-site residue. N-linked (GlcNAc...) asparagine glycosylation is found at Asn316, Asn323, Asn355, Asn443, Asn524, Asn543, Asn565, Asn669, and Asn713. Residues 730-754 (DSKYIPEGATDGSAQPRLPASGGAG) are disordered. Asn846 carries an N-linked (GlcNAc...) asparagine glycan.

Belongs to the glycosyl hydrolase 3 family.

The protein localises to the secreted. The catalysed reaction is Hydrolysis of terminal, non-reducing beta-D-glucosyl residues with release of beta-D-glucose.. The protein operates within glycan metabolism; cellulose degradation. Beta-glucosidases are one of a number of cellulolytic enzymes involved in the degradation of cellulosic biomass. Catalyzes the last step releasing glucose from the inhibitory cellobiose. The polypeptide is Probable beta-glucosidase A (bglA) (Aspergillus oryzae (strain ATCC 42149 / RIB 40) (Yellow koji mold)).